Reading from the N-terminus, the 100-residue chain is Protein Vpr (100 aa).

The interval 1–42 (MEQALENQGPAREPFNEWTLELLEELKEEAVRHFPRPWLQAC) is homooligomerization. Phosphoserine; by host occurs at positions 79, 98, and 100.

Belongs to the HIV-1 VPR protein family. Homooligomer, may form homodimer. Interacts with p6-gag region of the Pr55 Gag precursor protein through a (Leu-X-X)4 motif near the C-terminus of the P6gag protein. Interacts with host UNG. May interact with host RAD23A/HHR23A. Interacts with host VPRBP/DCAF1, leading to hijack the CUL4A-RBX1-DDB1-DCAF1/VPRBP complex, mediating ubiquitination of host proteins such as TERT and ZGPAT and arrest of the cell cycle in G2 phase. Phosphorylated on several residues by host. These phosphorylations regulate VPR activity for the nuclear import of the HIV-1 pre-integration complex.

It localises to the virion. Its subcellular location is the host nucleus. The protein localises to the host extracellular space. In terms of biological role, during virus replication, may deplete host UNG protein, and incude G2-M cell cycle arrest. Acts by targeting specific host proteins for degradation by the 26S proteasome, through association with the cellular CUL4A-DDB1 E3 ligase complex by direct interaction with host VPRPB/DCAF-1. Cell cycle arrest reportedly occurs within hours of infection and is not blocked by antiviral agents, suggesting that it is initiated by the VPR carried into the virion. Additionally, VPR induces apoptosis in a cell cycle dependent manner suggesting that these two effects are mechanistically linked. Detected in the serum and cerebrospinal fluid of AIDS patient, VPR may also induce cell death to bystander cells. During virus entry, plays a role in the transport of the viral pre-integration (PIC) complex to the host nucleus. This function is crucial for viral infection of non-dividing macrophages. May act directly at the nuclear pore complex, by binding nucleoporins phenylalanine-glycine (FG)-repeat regions. The polypeptide is Protein Vpr (Human immunodeficiency virus type 1 group O (isolate MVP5180) (HIV-1)).